We begin with the raw amino-acid sequence, 351 residues long: UDP-N-acetylglucosamine--N-acetylmuramyl-(pentapeptide) pyrophosphoryl-undecaprenol N-acetylglucosamine transferase (351 aa).

UDP-N-acetyl-alpha-D-glucosamine-binding positions include 13–15 (TGG), asparagine 125, arginine 161, serine 189, isoleucine 241, 260–265 (ALTVCE), and glutamine 285.

The protein belongs to the glycosyltransferase 28 family. MurG subfamily.

The protein localises to the cell inner membrane. The enzyme catalyses di-trans,octa-cis-undecaprenyl diphospho-N-acetyl-alpha-D-muramoyl-L-alanyl-D-glutamyl-meso-2,6-diaminopimeloyl-D-alanyl-D-alanine + UDP-N-acetyl-alpha-D-glucosamine = di-trans,octa-cis-undecaprenyl diphospho-[N-acetyl-alpha-D-glucosaminyl-(1-&gt;4)]-N-acetyl-alpha-D-muramoyl-L-alanyl-D-glutamyl-meso-2,6-diaminopimeloyl-D-alanyl-D-alanine + UDP + H(+). Its pathway is cell wall biogenesis; peptidoglycan biosynthesis. Its function is as follows. Cell wall formation. Catalyzes the transfer of a GlcNAc subunit on undecaprenyl-pyrophosphoryl-MurNAc-pentapeptide (lipid intermediate I) to form undecaprenyl-pyrophosphoryl-MurNAc-(pentapeptide)GlcNAc (lipid intermediate II). The sequence is that of UDP-N-acetylglucosamine--N-acetylmuramyl-(pentapeptide) pyrophosphoryl-undecaprenol N-acetylglucosamine transferase from Haemophilus influenzae (strain PittEE).